A 492-amino-acid chain; its full sequence is Bifunctional purine biosynthesis protein PurH (492 aa).

An MGS-like domain is found at 1–144 (MKKAILSVSN…KNYKHVTTIV (144 aa)).

It belongs to the PurH family.

It catalyses the reaction (6R)-10-formyltetrahydrofolate + 5-amino-1-(5-phospho-beta-D-ribosyl)imidazole-4-carboxamide = 5-formamido-1-(5-phospho-D-ribosyl)imidazole-4-carboxamide + (6S)-5,6,7,8-tetrahydrofolate. It carries out the reaction IMP + H2O = 5-formamido-1-(5-phospho-D-ribosyl)imidazole-4-carboxamide. It functions in the pathway purine metabolism; IMP biosynthesis via de novo pathway; 5-formamido-1-(5-phospho-D-ribosyl)imidazole-4-carboxamide from 5-amino-1-(5-phospho-D-ribosyl)imidazole-4-carboxamide (10-formyl THF route): step 1/1. The protein operates within purine metabolism; IMP biosynthesis via de novo pathway; IMP from 5-formamido-1-(5-phospho-D-ribosyl)imidazole-4-carboxamide: step 1/1. The sequence is that of Bifunctional purine biosynthesis protein PurH from Staphylococcus aureus (strain Newman).